The chain runs to 339 residues: Trace amine-associated receptor 1 (339 aa).

The Extracellular portion of the chain corresponds to 1-24 (MMPFCHNIINISCVKNNWSNDVRA). Cystine bridges form between Cys5–Cys178, Cys13–Cys88, and Cys96–Cys182. N-linked (GlcNAc...) asparagine glycosylation is found at Asn10 and Asn17. A helical transmembrane segment spans residues 25–49 (SLYSLMVLIILTTLVGNLIVIVSIS). Residues 50–59 (HFKQLHTPTN) are Cytoplasmic-facing. A helical membrane pass occupies residues 60–81 (WLIHSMATVDFLLGCLVMPYSM). The Extracellular segment spans residues 82–96 (VRSAEHCWYFGEVFC). Residues 97-119 (KIHTSTDIMLSSASIFHLSFISI) form a helical membrane-spanning segment. Asp103 serves as a coordination point for 2-phenylethylamine. The Cytoplasmic portion of the chain corresponds to 120 to 139 (DRYYAVCDPLRYKAKMNILV). The chain crosses the membrane as a helical span at residues 140-161 (ICVMIFISWSVPAVFAFGMIFL). The Extracellular portion of the chain corresponds to 162–188 (ELNFKGAEEIYYKHVHCRGGCSVFFSK). An extracellular Loop 2 (ECL2) region spans residues 175-186 (HVHCRGGCSVFF). The chain crosses the membrane as a helical span at residues 189–211 (ISGVLTFMTSFYIPGSIMLCVYY). At 212–249 (RIYLIAKEQARLISDANQKLQIGLEMKNGISQSKERKA) the chain is on the cytoplasmic side. The helical transmembrane segment at 250–273 (VKTLGIVMGVFLICWCPFFICTVM) threads the bilayer. The Extracellular portion of the chain corresponds to 274–286 (DPFLHYIIPPTLN). Residues 287–307 (DVLIWFGYLNSTFNPMVYAFF) traverse the membrane as a helical segment. The Cytoplasmic portion of the chain corresponds to 308–339 (YPWFRKALKMMLFGKIFQKDSSRCKLFLELSS).

This sequence belongs to the G-protein coupled receptor 1 family. As to expression, expressed at low level in both the central and peripheral nervous system. Moderately expressed in stomach. Low levels in amygdala, kidney, and lung, and small intestine. Trace amounts in cerebellum, dorsal root ganglia, hippocampus, hypothalamus, liver, medulla, pancreas, pituitary, pontine reticular formation, prostate, skeletal muscle and spleen.

Its subcellular location is the endomembrane system. The protein localises to the endoplasmic reticulum membrane. It localises to the cell membrane. With respect to regulation, activated by SEP-363856 small molecule: IHCH-7179 acts both as an agonist activator for HTR1A and TAAR1. Functionally, intracellular G-protein coupled receptor for trace amines, which recognizes endogenous amine-containing metabolites such as beta-phenylethylamine (beta-PEA), 3-iodothyronamine (T1AM), isoamylamine (IAA), cadaverine (CAD), cyclohexylamine (CHA), p-tyramine (p-TYR), trimethylamine (TMA), octopamine and tryptamine. Also functions as a receptor for various drugs and psychoactive substances, such as amphetamine and methamphetamine. Unresponsive to classical biogenic amines, such as epinephrine and histamine and only partially activated by dopamine and serotonin. Expressed in both the central and peripheral nervous system: TAAR1 activation regulates the activity of several neurotransmitter signaling pathways by (1) decreasing the basal firing rates of the neurons involved and by (2) lowering the sensitivity of receptors to neurotransmitters. Ligand binding causes a conformation change that triggers signaling via guanine nucleotide-binding proteins (G proteins) and modulates the activity of downstream effectors. TAAR1 is coupled with different G(i)/G(o)-, G(s)- or G(q)/G(11) classes of G alpha proteins depending on the ligand. CAD-binding is coupled to G(i)/G(o) G alpha proteins and mediates inhibition of adenylate cyclase activity. T1AM- or beta-PEA-binding is coupled to G(s) G alpha proteins and mediates activation of adenylate cyclase activity. CHA- or IAA-binding is coupled to G(q)/G(11) G alpha proteins and activates phospholipase C-beta, releasing diacylglycerol (DAG) and inositol 1,4,5-trisphosphate (IP3) second messengers. TMA-binding is coupled with all three G(i)/G(o)-, G(s)- or G(q)/G(11) G alpha protein subtypes. Amphetamine-binding is coupled with G(s)- or G(12)/G(13) G alpha protein subtypes. This chain is Trace amine-associated receptor 1, found in Homo sapiens (Human).